The primary structure comprises 449 residues: Phosphoglucosamine mutase (449 aa).

The active-site Phosphoserine intermediate is the S100. Mg(2+) is bound by residues S100, D241, D243, and D245. A Phosphoserine modification is found at S100.

It belongs to the phosphohexose mutase family. The cofactor is Mg(2+). Activated by phosphorylation.

It catalyses the reaction alpha-D-glucosamine 1-phosphate = D-glucosamine 6-phosphate. Catalyzes the conversion of glucosamine-6-phosphate to glucosamine-1-phosphate. The protein is Phosphoglucosamine mutase of Clostridium botulinum (strain 657 / Type Ba4).